A 129-amino-acid polypeptide reads, in one-letter code: Small ribosomal subunit protein uS11 (129 aa).

This sequence belongs to the universal ribosomal protein uS11 family. In terms of assembly, part of the 30S ribosomal subunit. Interacts with proteins S7 and S18. Binds to IF-3.

Functionally, located on the platform of the 30S subunit, it bridges several disparate RNA helices of the 16S rRNA. Forms part of the Shine-Dalgarno cleft in the 70S ribosome. The chain is Small ribosomal subunit protein uS11 from Haemophilus influenzae (strain 86-028NP).